The sequence spans 169 residues: Neurotensin/neuromedin N (169 aa).

A signal peptide spans 1-22 (MRGMNLQLVCLTLLAFSSWSLC).

This sequence belongs to the neurotensin family. As to quaternary structure, interacts with NTSR1. Interacts with SORT1. Interacts with SORL1. Neurotensin is cleaved and degraded by Angiotensin-converting enzyme (ACE) and neprilysin (MME).

The protein resides in the secreted. The protein localises to the cytoplasmic vesicle. Its subcellular location is the secretory vesicle. Neurotensin may play an endocrine or paracrine role in the regulation of fat metabolism. It causes contraction of smooth muscle. This is Neurotensin/neuromedin N (Nts) from Mus musculus (Mouse).